A 269-amino-acid polypeptide reads, in one-letter code: Large ribosomal subunit protein uL3m (269 aa).

A mitochondrion-targeting transit peptide spans M1–Y19.

The protein belongs to the universal ribosomal protein uL3 family. As to quaternary structure, component of the mitochondrial large ribosomal subunit (mt-LSU). Mature yeast 74S mitochondrial ribosomes consist of a small (37S) and a large (54S) subunit. The 37S small subunit contains a 15S ribosomal RNA (15S mt-rRNA) and 34 different proteins. The 54S large subunit contains a 21S rRNA (21S mt-rRNA) and 46 different proteins.

It localises to the mitochondrion. In terms of biological role, component of the mitochondrial ribosome (mitoribosome), a dedicated translation machinery responsible for the synthesis of mitochondrial genome-encoded proteins, including at least some of the essential transmembrane subunits of the mitochondrial respiratory chain. The mitoribosomes are attached to the mitochondrial inner membrane and translation products are cotranslationally integrated into the membrane. The protein is Large ribosomal subunit protein uL3m (MRPL9) of Saccharomyces cerevisiae (strain ATCC 204508 / S288c) (Baker's yeast).